A 337-amino-acid polypeptide reads, in one-letter code: DNA-directed RNA polymerase subunit alpha (337 aa).

Residues Met-1–Glu-233 form an alpha N-terminal domain (alpha-NTD) region. The tract at residues Gly-266–Phe-337 is alpha C-terminal domain (alpha-CTD).

Belongs to the RNA polymerase alpha chain family. In plastids the minimal PEP RNA polymerase catalytic core is composed of four subunits: alpha, beta, beta', and beta''. When a (nuclear-encoded) sigma factor is associated with the core the holoenzyme is formed, which can initiate transcription.

It is found in the plastid. The protein resides in the chloroplast. The catalysed reaction is RNA(n) + a ribonucleoside 5'-triphosphate = RNA(n+1) + diphosphate. DNA-dependent RNA polymerase catalyzes the transcription of DNA into RNA using the four ribonucleoside triphosphates as substrates. This chain is DNA-directed RNA polymerase subunit alpha, found in Ceratophyllum demersum (Rigid hornwort).